The chain runs to 485 residues: Aspartyl/glutamyl-tRNA(Asn/Gln) amidotransferase subunit B (485 aa).

It belongs to the GatB/GatE family. GatB subfamily. Heterotrimer of A, B and C subunits.

The catalysed reaction is L-glutamyl-tRNA(Gln) + L-glutamine + ATP + H2O = L-glutaminyl-tRNA(Gln) + L-glutamate + ADP + phosphate + H(+). The enzyme catalyses L-aspartyl-tRNA(Asn) + L-glutamine + ATP + H2O = L-asparaginyl-tRNA(Asn) + L-glutamate + ADP + phosphate + 2 H(+). Its function is as follows. Allows the formation of correctly charged Asn-tRNA(Asn) or Gln-tRNA(Gln) through the transamidation of misacylated Asp-tRNA(Asn) or Glu-tRNA(Gln) in organisms which lack either or both of asparaginyl-tRNA or glutaminyl-tRNA synthetases. The reaction takes place in the presence of glutamine and ATP through an activated phospho-Asp-tRNA(Asn) or phospho-Glu-tRNA(Gln). The protein is Aspartyl/glutamyl-tRNA(Asn/Gln) amidotransferase subunit B of Paramagnetospirillum magneticum (strain ATCC 700264 / AMB-1) (Magnetospirillum magneticum).